The following is a 475-amino-acid chain: uncharacterized protein (475 aa).

Residues 185-244 (EISVSAISEQLASLMERVDKLEKMNAALEEENKQLKKEREATIKSVKKEAKKIKQEKPQI) are a coiled coil.

This is an uncharacterized protein from Nora virus.